The chain runs to 221 residues: UPF0758 protein HI_0952 (221 aa).

The 123-residue stretch at 99 to 221 folds into the MPN domain; sequence IINDPETVKL…CYSFAENCLL (123 aa). Zn(2+) is bound by residues H170, H172, and D183. The JAMM motif signature appears at 170-183; it reads HNHPSGITEPSYSD.

The protein belongs to the UPF0758 family.

The sequence is that of UPF0758 protein HI_0952 from Haemophilus influenzae (strain ATCC 51907 / DSM 11121 / KW20 / Rd).